A 213-amino-acid polypeptide reads, in one-letter code: Ribonuclease Oy (213 aa).

The active site involves H35. C51 and C96 are disulfide-bonded. Residue N52 is glycosylated (N-linked (GlcNAc...) asparagine). Catalysis depends on residues E89 and H93. N-linked (GlcNAc...) asparagine glycosylation is found at N121 and N142. Disulfide bonds link C160–C198 and C178–C188.

Belongs to the RNase T2 family.

It is found in the secreted. Releases mononucleotides from RNA in the order of 3'-GMP, 3'-AMP and 3'-UMP. This chain is Ribonuclease Oy, found in Magallana gigas (Pacific oyster).